A 1548-amino-acid polypeptide reads, in one-letter code: Dual oxidase 2 (1548 aa).

An N-terminal signal peptide occupies residues 1–25; that stretch reads MLRARPEALMLLGALLTGSLGPSGN. The Extracellular portion of the chain corresponds to 26 to 601; it reads QDALSLPWEV…EGSSPGFAIT (576 aa). A peroxidase-like; mediates peroxidase activity region spans residues 30–596; it reads SLPWEVQRYD…VLDFFEGSSP (567 aa). Asparagine 100, asparagine 348, asparagine 382, asparagine 455, and asparagine 537 each carry an N-linked (GlcNAc...) asparagine glycan. Cysteine 124 and cysteine 1162 are disulfide-bonded. A helical transmembrane segment spans residues 602 to 622; the sequence is IIALCCLPLVSLLLSGVVAYF. Residues 623–1041 lie on the Cytoplasmic side of the membrane; that stretch reads RGREHKKLQK…KRFVENYRRH (419 aa). 3 consecutive EF-hand domains span residues 819-854, 855-890, and 899-934; these read PQDMFVESMFSLADKDGNGYLSFREFLDILVVFMKG, SPEDKSRLMFTMYDLDENGFLSKDEFFTMMRSFIEI, and QLAEVVESMFRESGFQDKEELTWEDFHFMLRDHDSE. The Ca(2+) site is built by aspartate 832, aspartate 834, asparagine 836, tyrosine 838, glutamate 843, aspartate 868, aspartate 870, asparagine 872, and glutamate 879. Positions 960–1245 are interaction with TXNDC11; the sequence is ISCRVSFITR…GSYALIQLPT (286 aa). Residues 971 to 991 are disordered; that stretch reads PGERSHPQGLGPPAPEAPELG. A helical membrane pass occupies residues 1042-1062; the sequence is IVCVAIFSAICVGVFADRAYY. The Extracellular segment spans residues 1063-1076; that stretch reads YGFASPPSDIAQTT. A helical transmembrane segment spans residues 1077-1097; sequence LVGIILSRGTAASVSFMFSYI. The Ferric oxidoreductase domain maps to 1084–1266; the sequence is RGTAASVSFM…YGGDKLVSLS (183 aa). At 1098 to 1128 the chain is on the cytoplasmic side; sequence LLTMCRNLITFLRETFLNRYVPFDAAVDFHR. Residues 1129-1151 traverse the membrane as a helical segment; that stretch reads WIAMAAVVLAILHSAGHAVNVYI. The Extracellular segment spans residues 1152–1185; that stretch reads FSVSPLSLLACIFPNVFVNDGSKLPQKFYWWFFQ. The helical transmembrane segment at 1186-1206 threads the bilayer; it reads TVPGMTGVLLLLVLAIMYVFA. Topologically, residues 1207-1223 are cytoplasmic; the sequence is SHHFRRRSFRGFWLTHH. The next 2 helical transmembrane spans lie at 1224–1244 and 1245–1265; these read LYILLYALLIIHGSYALIQLP and TFHIYFLVPAIIYGGDKLVSL. Residues 1266-1548 are Cytoplasmic-facing; it reads SRKKVEISVV…AHFMHHYENF (283 aa). One can recognise an FAD-binding FR-type domain in the interval 1267-1373; the sequence is RKKVEISVVK…DGPFGEGHQE (107 aa).

It in the N-terminal section; belongs to the peroxidase family. Heterodimer with DUOXA2; disulfide-linked. Interacts with TXNDC11, TPO and CYBA. In terms of processing, N-glycosylated. As to expression, expressed in colon, small intestine, duodenum and tracheal surface epithelial cells (at protein level). Expressed in thyrocytes. Also detected in kidney, liver, lung, pancreas, prostate, salivary glands, rectum and testis.

It localises to the apical cell membrane. It is found in the cell junction. It catalyses the reaction NADH + O2 + H(+) = H2O2 + NAD(+). It carries out the reaction NADPH + O2 + H(+) = H2O2 + NADP(+). The protein operates within hormone biosynthesis; thyroid hormone biosynthesis. With respect to regulation, peroxidase activity is inhibited by aminobenzohydrazide. The NADPH oxidase activity is calcium-dependent. In terms of biological role, generates hydrogen peroxide which is required for the activity of thyroid peroxidase/TPO and lactoperoxidase/LPO. Plays a role in thyroid hormones synthesis and lactoperoxidase-mediated antimicrobial defense at the surface of mucosa. May have its own peroxidase activity through its N-terminal peroxidase-like domain. This chain is Dual oxidase 2 (DUOX2), found in Homo sapiens (Human).